Here is an 828-residue protein sequence, read N- to C-terminus: Protein TAPT1 homolog (828 aa).

3 stretches are compositionally biased toward low complexity: residues 67–83 (NNNNNNNSNNVSSGNHI), 212–233 (QQTQPQPQPQTQTTQQPSSQQP), and 302–321 (SNNNDNNDNNNNNNSKNNNN). Disordered regions lie at residues 67 to 92 (NNNNNNNSNNVSSGNHITNSNSNSSG), 212 to 236 (QQTQPQPQPQTQTTQQPSSQQPFSY), and 297 to 346 (QTTP…TSSI). The next 5 membrane-spanning stretches (helical) occupy residues 428 to 448 (ISFGFLVCFDSFLFLFTFLPI), 472 to 492 (QIFDLFRGFIWVTCFVFLNFI), 562 to 582 (ILGPFTHLLVATGYVCLHSLV), 722 to 742 (SSWGVNNIIGFVPFPLASIVV), and 754 to 774 (IFGIFLMVQIYICLVLLKIFI). A compositionally biased stretch (low complexity) spans 797 to 822 (LSSSSSSSSSNSLNTTSTTSTSTSTT). The segment at 797 to 828 (LSSSSSSSSSNSLNTTSTTSTSTSTTNDKKNN) is disordered.

It belongs to the TAPT1 family.

Its subcellular location is the membrane. The protein is Protein TAPT1 homolog of Dictyostelium discoideum (Social amoeba).